We begin with the raw amino-acid sequence, 341 residues long: Protein P3 (341 aa).

Residues 46-175 are disordered; that stretch reads RARQAANPVS…QTKNAPDANE (130 aa). The span at 97 to 116 shows a compositional bias: basic residues; it reads KSKRAVRREKRRTAAKKATN. Residues 142-152 show a composition bias toward low complexity; sequence SYLSSLLSSPS.

Belongs to the nepovirus protein P3 family.

The sequence is that of Protein P3 from Vitis rupestris (Grape).